Consider the following 353-residue polypeptide: Photosystem II protein D1 (353 aa).

N-acetylthreonine is present on Thr-2. Thr-2 carries the phosphothreonine modification. The next 3 membrane-spanning stretches (helical) occupy residues 29 to 46 (YIGW…TATS), 118 to 133 (HFLL…EWEL), and 142 to 156 (WIAV…AATA). His-118 lines the chlorophyll a pocket. A pheophytin a-binding site is contributed by Tyr-126. Positions 170 and 189 each coordinate [CaMn4O5] cluster. The helical transmembrane segment at 197–218 (FHMLGVAGVFGGSLFSAMHGSL) threads the bilayer. His-198 provides a ligand contact to chlorophyll a. A quinone contacts are provided by residues His-215 and 264 to 265 (SF). His-215 provides a ligand contact to Fe cation. His-272 is a binding site for Fe cation. Residues 274 to 288 (FLAAWPVAGIWFTAL) traverse the membrane as a helical segment. Residues His-332, Glu-333, Asp-342, and Ala-344 each contribute to the [CaMn4O5] cluster site. A propeptide spanning residues 345–353 (AVESISIGG) is cleaved from the precursor.

The protein belongs to the reaction center PufL/M/PsbA/D family. In terms of assembly, PSII is composed of 1 copy each of membrane proteins PsbA, PsbB, PsbC, PsbD, PsbE, PsbF, PsbH, PsbI, PsbJ, PsbK, PsbL, PsbM, PsbT, PsbX, PsbY, PsbZ, Psb30/Ycf12, at least 3 peripheral proteins of the oxygen-evolving complex and a large number of cofactors. It forms dimeric complexes. Requires The D1/D2 heterodimer binds P680, chlorophylls that are the primary electron donor of PSII, and subsequent electron acceptors. It shares a non-heme iron and each subunit binds pheophytin, quinone, additional chlorophylls, carotenoids and lipids. D1 provides most of the ligands for the Mn4-Ca-O5 cluster of the oxygen-evolving complex (OEC). There is also a Cl(-1) ion associated with D1 and D2, which is required for oxygen evolution. The PSII complex binds additional chlorophylls, carotenoids and specific lipids. as cofactor. In terms of processing, tyr-161 forms a radical intermediate that is referred to as redox-active TyrZ, YZ or Y-Z. Post-translationally, C-terminally processed by CTPA; processing is essential to allow assembly of the oxygen-evolving complex and thus photosynthetic growth.

The protein resides in the plastid. It localises to the chloroplast thylakoid membrane. The catalysed reaction is 2 a plastoquinone + 4 hnu + 2 H2O = 2 a plastoquinol + O2. Photosystem II (PSII) is a light-driven water:plastoquinone oxidoreductase that uses light energy to abstract electrons from H(2)O, generating O(2) and a proton gradient subsequently used for ATP formation. It consists of a core antenna complex that captures photons, and an electron transfer chain that converts photonic excitation into a charge separation. The D1/D2 (PsbA/PsbD) reaction center heterodimer binds P680, the primary electron donor of PSII as well as several subsequent electron acceptors. The polypeptide is Photosystem II protein D1 (Pinus contorta (Shore pine)).